Consider the following 562-residue polypeptide: MFS-type transporter calB (562 aa).

A compositionally biased stretch (polar residues) spans 1-16; that stretch reads MDEVTRTAQRSPSITE. The disordered stretch occupies residues 1–45; it reads MDEVTRTAQRSPSITETHAGETKLAGPGEKEGDVESPVDPSADSE. The chain crosses the membrane as a helical span at residues 57–77; sequence FAILASVTLSAFLMLLDGSII. N83 carries an N-linked (GlcNAc...) asparagine glycan. Transmembrane regions (helical) follow at residues 94 to 113, 123 to 143, 154 to 174, 184 to 204, 213 to 233, 256 to 276, 284 to 304, 329 to 349, 362 to 382, 389 to 409, 418 to 438, 451 to 471, and 530 to 550; these read IGWY…PLSG, WTYL…GVAN, VAGL…AGAV, GIYL…GGAL, CFYI…FLQV, LIGF…LYYG, SSQV…FALW, INGA…PIYF, VNTL…GVLV, LPFA…VTLF, WIGY…MGII, VGIA…VVVG, and VFYL…GMGW. N-linked (GlcNAc...) asparagine glycosylation occurs at N557.

This sequence belongs to the major facilitator superfamily. TCR/Tet family.

The protein localises to the cell membrane. Functionally, MFS-type transporter; part of the gene cluster that mediates the biosynthesis of calbistrin A and related compounds. Calbistrin A is a secondary metabolite with an interesting structure that was recently found to have bioactivity against leukemia cells. It consists of two polyketides linked by an ester bond: a bicyclic decalin containing polyketide and a linear 12 carbon dioic acid structure. Required for the secretion of calbistrin A and calbistrin C, as well as of related compounds decumbenone A, B and C. In Penicillium decumbens, this protein is MFS-type transporter calB.